The primary structure comprises 709 residues: Protein transport protein SEC39 (709 aa).

This sequence belongs to the SEC39 family. Component of a peripheral membrane protein complex consisting of DSL1, SEC39/DSL3 and TIP20. Bound to a SNARE complex consisting of UFE1, USE1, SEC20 and SEC22 or YKT6 through direct interaction of TIP20 with SEC20. Interacts with TIP20 and DSL1.

The protein resides in the endoplasmic reticulum membrane. Its function is as follows. Required for protein transport between the Golgi and the endoplasmic reticulum. May contribute to tethering of coatomer-coated retrograde transport vesicles to the ER membrane through interaction with and stabilization of the SNARE complex. The polypeptide is Protein transport protein SEC39 (Saccharomyces cerevisiae (strain ATCC 204508 / S288c) (Baker's yeast)).